Reading from the N-terminus, the 430-residue chain is Long-chain specific acyl-CoA dehydrogenase, mitochondrial (430 aa).

A mitochondrion-targeting transit peptide spans M1–S30. The segment at S17–P39 is disordered. N6-acetyllysine is present on K42. Residues S54 and S55 each carry the phosphoserine modification. K66 and K81 each carry N6-acetyllysine; alternate. K66 and K81 each carry N6-succinyllysine; alternate. An N6-acetyllysine mark is found at K92 and K95. K165 is subject to N6-succinyllysine. FAD is bound at residue I170–S179. S179 contacts substrate. A Phosphoserine modification is found at S191. F203–T205 lines the FAD pocket. Residue A227–H228 coordinates substrate. N6-succinyllysine is present on K240. Residues K254 and K279 each carry the N6-acetyllysine; alternate modification. N6-succinyllysine; alternate is present on residues K254 and K279. Residues Y282 and P289–R292 each bind substrate. Catalysis depends on E291, which acts as the Proton acceptor. R317 contacts FAD. The residue at position 318 (K318) is an N6-acetyllysine. K322 carries the N6-acetyllysine; alternate modification. Residue K322 is modified to N6-succinyllysine; alternate. Position 328 (Q328) interacts with FAD. Residue K358 is modified to N6-acetyllysine. S362 carries the post-translational modification Phosphoserine. Residue Q385–G389 participates in FAD binding. A substrate-binding site is contributed by G412–G413. T414–E416 provides a ligand contact to FAD.

This sequence belongs to the acyl-CoA dehydrogenase family. Homotetramer. The cofactor is FAD. Acetylation at Lys-318 and Lys-322 in proximity of the cofactor-binding sites strongly reduces catalytic activity. These sites are deacetylated by SIRT3. In terms of tissue distribution, expressed in heart, skeletal muscle, kidney, and brain. Expressed in liver (at protein level).

Its subcellular location is the mitochondrion matrix. The catalysed reaction is a long-chain 2,3-saturated fatty acyl-CoA + oxidized [electron-transfer flavoprotein] + H(+) = a long-chain (2E)-enoyl-CoA + reduced [electron-transfer flavoprotein]. It catalyses the reaction oxidized [electron-transfer flavoprotein] + hexadecanoyl-CoA + H(+) = (2E)-hexadecenoyl-CoA + reduced [electron-transfer flavoprotein]. The enzyme catalyses hexanoyl-CoA + oxidized [electron-transfer flavoprotein] + H(+) = (2E)-hexenoyl-CoA + reduced [electron-transfer flavoprotein]. It carries out the reaction octanoyl-CoA + oxidized [electron-transfer flavoprotein] + H(+) = (2E)-octenoyl-CoA + reduced [electron-transfer flavoprotein]. The catalysed reaction is decanoyl-CoA + oxidized [electron-transfer flavoprotein] + H(+) = (2E)-decenoyl-CoA + reduced [electron-transfer flavoprotein]. It catalyses the reaction dodecanoyl-CoA + oxidized [electron-transfer flavoprotein] + H(+) = (2E)-dodecenoyl-CoA + reduced [electron-transfer flavoprotein]. The enzyme catalyses tetradecanoyl-CoA + oxidized [electron-transfer flavoprotein] + H(+) = (2E)-tetradecenoyl-CoA + reduced [electron-transfer flavoprotein]. It carries out the reaction octadecanoyl-CoA + oxidized [electron-transfer flavoprotein] + H(+) = (2E)-octadecenoyl-CoA + reduced [electron-transfer flavoprotein]. The catalysed reaction is eicosanoyl-CoA + oxidized [electron-transfer flavoprotein] + H(+) = (2E)-eicosenoyl-CoA + reduced [electron-transfer flavoprotein]. It catalyses the reaction docosanoyl-CoA + oxidized [electron-transfer flavoprotein] + H(+) = (2E)-docosenoyl-CoA + reduced [electron-transfer flavoprotein]. The enzyme catalyses tetracosanoyl-CoA + oxidized [electron-transfer flavoprotein] + H(+) = (2E)-tetracosenoyl-CoA + reduced [electron-transfer flavoprotein]. It carries out the reaction (5E)-tetradecenoyl-CoA + oxidized [electron-transfer flavoprotein] + H(+) = (2E,5E)-tetradecadienoyl-CoA + reduced [electron-transfer flavoprotein]. The catalysed reaction is (5Z)-tetradecenoyl-CoA + oxidized [electron-transfer flavoprotein] + H(+) = (2E,5Z)-tetradecadienoyl-CoA + reduced [electron-transfer flavoprotein]. It catalyses the reaction oxidized [electron-transfer flavoprotein] + (9Z)-octadecenoyl-CoA + H(+) = (2E,9Z)-octadecadienoyl-CoA + reduced [electron-transfer flavoprotein]. The protein operates within lipid metabolism; mitochondrial fatty acid beta-oxidation. Functionally, long-chain specific acyl-CoA dehydrogenase is one of the acyl-CoA dehydrogenases that catalyze the first step of mitochondrial fatty acid beta-oxidation, an aerobic process breaking down fatty acids into acetyl-CoA and allowing the production of energy from fats. The first step of fatty acid beta-oxidation consists in the removal of one hydrogen from C-2 and C-3 of the straight-chain fatty acyl-CoA thioester, resulting in the formation of trans-2-enoyl-CoA. Among the different mitochondrial acyl-CoA dehydrogenases, long-chain specific acyl-CoA dehydrogenase can act on saturated and unsaturated acyl-CoAs with 6 to 24 carbons with a preference for 8 to 18 carbons long primary chains. The protein is Long-chain specific acyl-CoA dehydrogenase, mitochondrial of Mus musculus (Mouse).